Here is a 494-residue protein sequence, read N- to C-terminus: Glutamyl-tRNA(Gln) amidotransferase subunit A (494 aa).

Catalysis depends on charge relay system residues Lys79 and Ser159. Ser183 acts as the Acyl-ester intermediate in catalysis.

This sequence belongs to the amidase family. GatA subfamily. In terms of assembly, heterotrimer of A, B and C subunits.

The catalysed reaction is L-glutamyl-tRNA(Gln) + L-glutamine + ATP + H2O = L-glutaminyl-tRNA(Gln) + L-glutamate + ADP + phosphate + H(+). In terms of biological role, allows the formation of correctly charged Gln-tRNA(Gln) through the transamidation of misacylated Glu-tRNA(Gln) in organisms which lack glutaminyl-tRNA synthetase. The reaction takes place in the presence of glutamine and ATP through an activated gamma-phospho-Glu-tRNA(Gln). The polypeptide is Glutamyl-tRNA(Gln) amidotransferase subunit A (Bartonella henselae (strain ATCC 49882 / DSM 28221 / CCUG 30454 / Houston 1) (Rochalimaea henselae)).